Here is a 478-residue protein sequence, read N- to C-terminus: Cell division protein FtsZ homolog 2-1, chloroplastic (478 aa).

The interval 86–112 is disordered; the sequence is EGTSTIVNPRKETSSGPVVEDFEEPSA. 128–132 provides a ligand contact to GTP; that stretch reads GGGSN. Residue serine 143 is modified to Phosphoserine; by PGK1. GTP is bound by residues 217–219, glutamate 248, and arginine 252; that span reads GTG. The residue at position 286 (threonine 286) is a Phosphothreonine; by PGK1. Position 296 (aspartate 296) interacts with GTP.

The protein belongs to the FtsZ family. Aggregates to form a contractile ring-like structure; contraction of the ring was accompanied by an increase in the filament turnover rate. Self-interacts and binds to FTSZ1 in heteromers to form two morphologically distinct types of filaments, termed type-I (smooth filaments) and -II (rough filaments), in a GTP-dependent manner; the GDP-induced disassembly is inhibited by ARC6. Interacts (via C-terminus) with ARC6; this interaction enables ARC3 binding to FTSZ2. Part of a complex made of ARC3, ARC6, FTSZ1 and FTSZ2. Binds to MCD1 in an ARC6-dependent manner. Binds to CDP1/PARC6. Part of a complex made of CDP1/PARC6, ARC3 and FtsZ proteins in the middle of the plastid; this complex enhances the dynamics of Z rings during chloroplast division. Binds to PGK1. Post-translationally, filaments containing FTSZ2-1 are stabilized when in complex with GTP but destabilized after conversion of GTP into GDP; ARC6 conteracts this destabilisation by preventing the dissociation of GDP-bound FTSZ2 molecules thus inhibiting filament disassembly whereas ARC3 promotes GTPase activity thus accelerating the conversion of GTP into GDP and triggering FtsZ2 filaments disassembly. Phosphorylation at Ser-143 is necessary for interactions with ARC3, ARC6, FTSZ1 and FTSZ2-2. Phosphorylations at Ser-143 and Thr-286 are required for the formation of contractile ring at the chloroplast midpoint.

The protein localises to the plastid. Its subcellular location is the chloroplast stroma. It is found in the chloroplast thylakoid membrane. GTPase activity is enhanced by ARC3. In terms of biological role, exhibits GTPase activity which converts GTP ligands to GDP. Component of the plastid division machinery consisting in a binary fission accomplished by the simultaneous constriction of the FtsZ ring on the stromal side of the inner envelope membrane, and the ARC5 ring on the cytosolic side of the outer envelope membrane. Required for plastid division in a dose-dependent manner. In the vegetative shoot apex, at the shoot apical meristem (SAM), where the proplastid-to-chloroplast transition takes place, major contributor of plastid division in the L1 and L3 layers and contributes equally with FTSZ1 in the L2 layer. The chain is Cell division protein FtsZ homolog 2-1, chloroplastic from Arabidopsis thaliana (Mouse-ear cress).